Here is a 1400-residue protein sequence, read N- to C-terminus: DNA-directed RNA polymerase subunit beta' (1400 aa).

Residues Cys-71, Cys-73, Cys-86, and Cys-89 each contribute to the Zn(2+) site. Mg(2+) is bound by residues Asp-462, Asp-464, and Asp-466. Zn(2+) contacts are provided by Cys-820, Cys-893, Cys-900, and Cys-903.

Belongs to the RNA polymerase beta' chain family. The RNAP catalytic core consists of 2 alpha, 1 beta, 1 beta' and 1 omega subunit. When a sigma factor is associated with the core the holoenzyme is formed, which can initiate transcription. Mg(2+) is required as a cofactor. Requires Zn(2+) as cofactor.

It catalyses the reaction RNA(n) + a ribonucleoside 5'-triphosphate = RNA(n+1) + diphosphate. DNA-dependent RNA polymerase catalyzes the transcription of DNA into RNA using the four ribonucleoside triphosphates as substrates. This chain is DNA-directed RNA polymerase subunit beta', found in Methylobacterium nodulans (strain LMG 21967 / CNCM I-2342 / ORS 2060).